Reading from the N-terminus, the 177-residue chain is Adenine phosphoribosyltransferase (177 aa).

Belongs to the purine/pyrimidine phosphoribosyltransferase family. Homodimer.

It is found in the cytoplasm. It carries out the reaction AMP + diphosphate = 5-phospho-alpha-D-ribose 1-diphosphate + adenine. The protein operates within purine metabolism; AMP biosynthesis via salvage pathway; AMP from adenine: step 1/1. In terms of biological role, catalyzes a salvage reaction resulting in the formation of AMP, that is energically less costly than de novo synthesis. This chain is Adenine phosphoribosyltransferase, found in Chlorobium limicola (strain DSM 245 / NBRC 103803 / 6330).